A 439-amino-acid polypeptide reads, in one-letter code: Na(+)/H(+) antiporter NhaA (439 aa).

The next 11 membrane-spanning stretches (helical) occupy residues 12 to 32 (SMNI…AIIA), 67 to 87 (MIEF…GLEI), 103 to 123 (ALPF…YMSI), 133 to 153 (GLAI…SLLG), 162 to 182 (IFLT…IALF), 186 to 206 (HVSY…YFIG), 214 to 234 (IFFL…GIHS), 314 to 334 (ILPL…GELV), 341 to 361 (VAAG…WLAI), 379 to 399 (GIAL…NLSF), and 412 to 432 (FGVL…LRIV).

It belongs to the NhaA Na(+)/H(+) (TC 2.A.33) antiporter family.

Its subcellular location is the cell inner membrane. It catalyses the reaction Na(+)(in) + 2 H(+)(out) = Na(+)(out) + 2 H(+)(in). Na(+)/H(+) antiporter that extrudes sodium in exchange for external protons. In Bacteroides thetaiotaomicron (strain ATCC 29148 / DSM 2079 / JCM 5827 / CCUG 10774 / NCTC 10582 / VPI-5482 / E50), this protein is Na(+)/H(+) antiporter NhaA.